A 1096-amino-acid chain; its full sequence is Lysine-specific demethylase PHF2 (1096 aa).

Residues 5 to 56 form a PHD-type zinc finger; it reads PVYCVCRLPYDVTRFMIECDACKDWFHGSCVGVEEEEAPDIDIYHCPNCEKT. 2-oxoglutarate-binding residues include Thr-193 and Thr-246. The JmjC domain occupies 197–353; that stretch reads FSDTRMSSFV…MQMRAYEVER (157 aa). Residues His-249 and Asp-251 each coordinate Fe cation. Tyr-259, Lys-266, Tyr-321, and Thr-323 together coordinate 2-oxoglutarate. Tyr-321 is a binding site for Fe cation. 2 disordered regions span residues 447 to 634 and 646 to 674; these read KAVR…KDNK and GSKALRPPTSPGVFGALQNFKEDKPKPVR. Phosphoserine is present on Ser-474. Thr-479 is subject to Phosphothreonine. A compositionally biased stretch (pro residues) spans 503–518; it reads SKIPKPPKPPKPPRPP. A Phosphoserine modification is found at Ser-539. Basic and acidic residues-rich tracts occupy residues 548–563 and 578–624; these read LEAHTKEALTKMEPPK and DVVH…KLEK. The residue at position 655 (Ser-655) is a Phosphoserine. Over residues 665 to 674 the composition is skewed to basic and acidic residues; it reads FKEDKPKPVR. 2 positions are modified to phosphoserine: Ser-681 and Ser-705. Lys-711 participates in a covalent cross-link: Glycyl lysine isopeptide (Lys-Gly) (interchain with G-Cter in SUMO2). Disordered stretches follow at residues 719 to 799, 817 to 846, and 877 to 1078; these read TKPK…QGML, AGQAKGSSLAAHGARKNGGGSGKSAGKRLL, and YPSL…MATA. Lys-720 bears the N6-acetyllysine mark. Tyr-728 bears the Phosphotyrosine mark. Positions 729–757 are enriched in basic and acidic residues; sequence KSDDSSDEGSLHIDTDTKPGRNARVKKES. Phosphoserine is present on residues Ser-730, Ser-733, Ser-734, and Ser-738. 3 positions are modified to phosphoserine: Ser-879, Ser-882, and Ser-899. The span at 916–925 shows a compositional bias: basic and acidic residues; that stretch reads RQDRPVREGT. A compositionally biased stretch (basic residues) spans 949-959; the sequence is SKKKKSAKRKL. Low complexity-rich tracts occupy residues 960–1009 and 1027–1040; these read TPNT…EGSS and TAAGTFTGAQAGRT. Residues 1053–1065 are compositionally biased toward polar residues; it reads RRPSASSPNNNTA. Phosphoserine; by PKA is present on Ser-1056.

This sequence belongs to the JHDM1 histone demethylase family. JHDM1D subfamily. Component of the PHF2-ARID5B complex, at least composed of PHF2 and ARID5B. Interacts with HNF4A and NR1H4. Interacts with RELA. In terms of processing, phosphorylated by PKA on specific serine residues, leading to the formation of an active lysine demethylase complex. Widely expressed, including in liver (at protein level).

It is found in the nucleus. It localises to the nucleolus. Its subcellular location is the chromosome. The protein resides in the centromere. The protein localises to the kinetochore. It catalyses the reaction N(6),N(6)-dimethyl-L-lysyl(9)-[histone H3] + 2-oxoglutarate + O2 = N(6)-methyl-L-lysyl(9)-[histone H3] + formaldehyde + succinate + CO2. Enzymatically inactive by itself, and become active following phosphorylation by PKA. In terms of biological role, lysine demethylase that demethylates both histones and non-histone proteins. Enzymatically inactive by itself, and becomes active following phosphorylation by PKA: forms a complex with ARID5B and mediates demethylation of methylated ARID5B. Demethylation of ARID5B leads to target the PHF2-ARID5B complex to target promoters, where PHF2 mediates demethylation of dimethylated 'Lys-9' of histone H3 (H3K9me2), followed by transcription activation of target genes. The PHF2-ARID5B complex acts as a coactivator of HNF4A in liver. PHF2 is recruited to trimethylated 'Lys-4' of histone H3 (H3K4me3) at rDNA promoters and promotes expression of rDNA. Involved in the activation of toll-like receptor 4 (TLR4)-target inflammatory genes in macrophages by catalyzing the demethylation of trimethylated histone H4 lysine 20 (H4K20me3) at the gene promoters. The polypeptide is Lysine-specific demethylase PHF2 (Homo sapiens (Human)).